A 227-amino-acid polypeptide reads, in one-letter code: Guanylate kinase (227 aa).

Positions 21-199 (GNLFMVVAPS…ALAELECIVA (179 aa)) constitute a Guanylate kinase-like domain. 28–35 (APSGAGKS) serves as a coordination point for ATP.

The protein belongs to the guanylate kinase family.

It localises to the cytoplasm. It catalyses the reaction GMP + ATP = GDP + ADP. Its function is as follows. Essential for recycling GMP and indirectly, cGMP. This chain is Guanylate kinase, found in Burkholderia lata (strain ATCC 17760 / DSM 23089 / LMG 22485 / NCIMB 9086 / R18194 / 383).